The chain runs to 263 residues: Small ribosomal subunit protein eS4, Y isoform 2 (263 aa).

An S4 RNA-binding domain is found at 42-104 (LPLIVFLRNR…TGEHFRLVYD (63 aa)).

This sequence belongs to the eukaryotic ribosomal protein eS4 family.

The chain is Small ribosomal subunit protein eS4, Y isoform 2 (RPS4Y2) from Pan troglodytes (Chimpanzee).